A 196-amino-acid polypeptide reads, in one-letter code: Imidazoleglycerol-phosphate dehydratase (196 aa).

It belongs to the imidazoleglycerol-phosphate dehydratase family.

It is found in the cytoplasm. The catalysed reaction is D-erythro-1-(imidazol-4-yl)glycerol 3-phosphate = 3-(imidazol-4-yl)-2-oxopropyl phosphate + H2O. It functions in the pathway amino-acid biosynthesis; L-histidine biosynthesis; L-histidine from 5-phospho-alpha-D-ribose 1-diphosphate: step 6/9. In Zymomonas mobilis subsp. mobilis (strain ATCC 31821 / ZM4 / CP4), this protein is Imidazoleglycerol-phosphate dehydratase.